Here is a 466-residue protein sequence, read N- to C-terminus: Sushi repeat-containing protein SRPX2 (466 aa).

The first 24 residues, 1–24 (MKTGSLTQRGALLLLLLLAPAVTP), serve as a signal peptide directing secretion. Sushi domains follow at residues 70-120 (ATCY…YCRQ), 121-179 (MRCH…VCVD), and 263-322 (RRCP…VCTP). 4 cysteine pairs are disulfide-bonded: C72–C106, C92–C118, C123–C164, and C150–C177. In terms of domain architecture, HYR spans 178–262 (VDIDPPKIRC…SCKFIVKVQV (85 aa)). 2 disulfide bridges follow: C265-C307 and C293-C320.

In terms of assembly, forms homooligomers. Interacts with PLAUR (via the UPAR/Ly6 domains), ADAMTS4 and CTSB. Interacts with HGF; the interaction increases the mitogenic activity of HGF. Contains chondroitin sulfate chains.

The protein resides in the secreted. It localises to the cytoplasm. Its subcellular location is the cell surface. The protein localises to the synapse. Its function is as follows. Acts as a ligand for the urokinase plasminogen activator surface receptor. Plays a role in angiogenesis by inducing endothelial cell migration and the formation of vascular network (cords). Involved in cellular migration and adhesion. Increases the phosphorylation levels of FAK. Interacts with and increases the mitogenic activity of HGF. Promotes synapse formation. This Rattus norvegicus (Rat) protein is Sushi repeat-containing protein SRPX2.